Consider the following 77-residue polypeptide: Small ribosomal subunit protein uS17c (77 aa).

This sequence belongs to the universal ribosomal protein uS17 family. In terms of assembly, part of the 30S ribosomal subunit.

The protein localises to the plastid. Its subcellular location is the chloroplast. Functionally, one of the primary rRNA binding proteins, it binds specifically to the 5'-end of 16S ribosomal RNA. This chain is Small ribosomal subunit protein uS17c (rps17), found in Cyanidium caldarium (Red alga).